The chain runs to 263 residues: Inner membrane protein YpjD (263 aa).

Residues 1–3 (MPV) are Periplasmic-facing. Residues 4-23 (FALLALVAYSVSLALIVPGL) traverse the membrane as a helical segment. Over 24–34 (LQKNGGWRRMA) the chain is Cytoplasmic. The helical transmembrane segment at 35–54 (IISAVIALVCHAIALEARIL) threads the bilayer. Over 55–63 (PDGDSGQNL) the chain is Periplasmic. The helical transmembrane segment at 64 to 83 (SLLNVGSLVSLMICTVMTIV) threads the bilayer. The Cytoplasmic portion of the chain corresponds to 84–89 (ASRNRG). A helical membrane pass occupies residues 90–109 (WLLLPIVYAFALINLALATF). The Periplasmic segment spans residues 110–123 (MPNEYITHLEATPG). Residues 124–146 (MLVHIGLSLFSYATLIIAALYAL) traverse the membrane as a helical segment. Over 147–181 (QLAWIDYQLKNKKLAFNQEMPPLMSIERKMFHITQ) the chain is Cytoplasmic. Residues 182–201 (IGVVLLTLTLCTGLFYMHNL) form a helical membrane-spanning segment. The Periplasmic portion of the chain corresponds to 202-210 (FSMENIDKA). A helical membrane pass occupies residues 211 to 228 (VLSIVAWFVYIVLLWGHY). Residues 229–236 (HEGWRGRR) lie on the Cytoplasmic side of the membrane. Residues 237-259 (VVWFNVAGAVILTLAYFGSRIVQ) traverse the membrane as a helical segment. The Periplasmic segment spans residues 260 to 263 (QLIS).

The protein localises to the cell inner membrane. This Escherichia coli O157:H7 protein is Inner membrane protein YpjD (ypjD).